Reading from the N-terminus, the 259-residue chain is Thiazole synthase (259 aa).

Catalysis depends on Lys-100, which acts as the Schiff-base intermediate with DXP. Residues Gly-161, 187-188 (AG), and 209-210 (AS) contribute to the 1-deoxy-D-xylulose 5-phosphate site.

Belongs to the ThiG family. Homotetramer. Forms heterodimers with either ThiH or ThiS.

The protein localises to the cytoplasm. The enzyme catalyses [ThiS sulfur-carrier protein]-C-terminal-Gly-aminoethanethioate + 2-iminoacetate + 1-deoxy-D-xylulose 5-phosphate = [ThiS sulfur-carrier protein]-C-terminal Gly-Gly + 2-[(2R,5Z)-2-carboxy-4-methylthiazol-5(2H)-ylidene]ethyl phosphate + 2 H2O + H(+). It participates in cofactor biosynthesis; thiamine diphosphate biosynthesis. In terms of biological role, catalyzes the rearrangement of 1-deoxy-D-xylulose 5-phosphate (DXP) to produce the thiazole phosphate moiety of thiamine. Sulfur is provided by the thiocarboxylate moiety of the carrier protein ThiS. In vitro, sulfur can be provided by H(2)S. The polypeptide is Thiazole synthase (Salinispora arenicola (strain CNS-205)).